Consider the following 90-residue polypeptide: uncharacterized protein (90 aa).

The protein belongs to the barstar family.

This is an uncharacterized protein from Escherichia coli O157:H7.